We begin with the raw amino-acid sequence, 168 residues long: Large ribosomal subunit protein uL29c (168 aa).

Residues 1–20 form a disordered region; sequence MLAIHSLSSTPCSSGLTSPP. The N-terminal 58 residues, 1-58, are a transit peptide targeting the chloroplast; it reads MLAIHSLSSTPCSSGLTSPPKSTLLTKSSFHGLRLPSVNLSSSLRLRVQTPPSSVVVM.

In terms of assembly, component of the chloroplast large ribosomal subunit (LSU). Mature 70S chloroplast ribosomes of higher plants consist of a small (30S) and a large (50S) subunit. The 30S small subunit contains 1 molecule of ribosomal RNA (16S rRNA) and 24 different proteins. The 50S large subunit contains 3 rRNA molecules (23S, 5S and 4.5S rRNA) and 33 different proteins.

The protein localises to the plastid. It is found in the chloroplast. Functionally, component of the chloroplast ribosome (chloro-ribosome), a dedicated translation machinery responsible for the synthesis of chloroplast genome-encoded proteins, including proteins of the transcription and translation machinery and components of the photosynthetic apparatus. This chain is Large ribosomal subunit protein uL29c (RPL29), found in Spinacia oleracea (Spinach).